The following is a 30-amino-acid chain: Photosystem I reaction center subunit XII (30 aa).

Residues 7–26 traverse the membrane as a helical segment; that stretch reads IMVALFAALFTGILALRLGT.

It belongs to the PsaM family.

The protein localises to the plastid. It is found in the chloroplast thylakoid membrane. The protein is Photosystem I reaction center subunit XII of Mesostigma viride (Green alga).